The primary structure comprises 302 residues: Aspartate carbamoyltransferase catalytic subunit (302 aa).

Residues R49 and T50 each contribute to the carbamoyl phosphate site. K77 serves as a coordination point for L-aspartate. Carbamoyl phosphate is bound by residues R99, H126, and Q129. R159 and R209 together coordinate L-aspartate. The carbamoyl phosphate site is built by A250 and P251.

Belongs to the aspartate/ornithine carbamoyltransferase superfamily. ATCase family. As to quaternary structure, heterododecamer (2C3:3R2) of six catalytic PyrB chains organized as two trimers (C3), and six regulatory PyrI chains organized as three dimers (R2).

The catalysed reaction is carbamoyl phosphate + L-aspartate = N-carbamoyl-L-aspartate + phosphate + H(+). Its pathway is pyrimidine metabolism; UMP biosynthesis via de novo pathway; (S)-dihydroorotate from bicarbonate: step 2/3. In terms of biological role, catalyzes the condensation of carbamoyl phosphate and aspartate to form carbamoyl aspartate and inorganic phosphate, the committed step in the de novo pyrimidine nucleotide biosynthesis pathway. In Staphylococcus carnosus (strain TM300), this protein is Aspartate carbamoyltransferase catalytic subunit.